We begin with the raw amino-acid sequence, 490 residues long: MGIKKMFKKKDPTEGEIRDELTQIGVTTKSDNKTRQEKFGAFKNYAQDRQNAKPGFQPVNPYANVNAGNGNGNPYAQQEAGGDGDGEAMGGNNSSPYDKTTNPYGSRSERANNPYGNGNVGASSRGERAGGRNTQTNPYGGARASGRASGSKPNPYGGVQNDGALADDTESINTAVTGYADPYGNETARASRQSTRRPRAYDEESLDLNAIPSHQAYTPSKPIKRTQMRDDETLDLNDLPEEEDLNLDVDELPEQEQVDSEDDEVEAIKQDIRFIKQESVGSTRNTLRMAQEADASATNTLGMMGSQSERLYNAESNLLLADTQSKIADQKVKDLKRYNRSIFVPAYGNPFNKKSRLRQQEMQIKADKAQEKYLRDTNRKEMYASEQRIKQGISQNATSSDVHQKYRSERDLEAAQRYQFENDSEDDEMEKELANNLDQIGLYSKKLQSSAKTMGNEVDSQNKRLGQIEEDADRLDINVHMNSARLNNIR.

Positions 1–244 are disordered; sequence MGIKKMFKKK…DLNDLPEEED (244 aa). 2 stretches are compositionally biased toward basic and acidic residues: residues 9–21 and 30–40; these read KKDP…RDEL and SDNKTRQEKFG. Residues 58 to 80 show a composition bias toward low complexity; sequence PVNPYANVNAGNGNGNPYAQQEA. Polar residues predominate over residues 94 to 105; the sequence is SSPYDKTTNPYG. The segment covering 140–151 has biased composition (low complexity); the sequence is GGARASGRASGS. A compositionally biased stretch (acidic residues) spans 232-244; that stretch reads ETLDLNDLPEEED. Residues 273–335 enclose the t-SNARE coiled-coil homology 1 domain; sequence RFIKQESVGS…KIADQKVKDL (63 aa). The tract at residues 389–410 is disordered; that stretch reads IKQGISQNATSSDVHQKYRSER. Residues 392-401 show a composition bias toward polar residues; that stretch reads GISQNATSSD. The t-SNARE coiled-coil homology 2 domain maps to 427-489; it reads DEMEKELANN…HMNSARLNNI (63 aa).

The protein belongs to the SNAP-25 family.

This Debaryomyces hansenii (strain ATCC 36239 / CBS 767 / BCRC 21394 / JCM 1990 / NBRC 0083 / IGC 2968) (Yeast) protein is Protein transport protein SEC9 (SEC9).